Here is a 266-residue protein sequence, read N- to C-terminus: Probable matrix protein (266 aa).

The segment at 158–177 is disordered; it reads ACSAGTGGTEEGDSDTEEEP. Residues 167–177 are compositionally biased toward acidic residues; that stretch reads EEGDSDTEEEP.

The protein localises to the virion. Functionally, may play a role in virion budding and release by binding the ribonucleocapsid and the host membrane. The protein is Probable matrix protein of Ixodidae (hardbacked ticks).